We begin with the raw amino-acid sequence, 447 residues long: Peptide-N(4)-(N-acetyl-beta-glucosaminyl)asparagine amidase (447 aa).

Cysteine 209, cysteine 212, cysteine 241, and cysteine 244 together coordinate Zn(2+). Cysteine 267 serves as the catalytic Nucleophile. Residues histidine 294 and aspartate 311 contribute to the active site.

Belongs to the transglutaminase-like superfamily. PNGase family. The cofactor is Zn(2+).

It is found in the cytoplasm. It carries out the reaction Hydrolysis of an N(4)-(acetyl-beta-D-glucosaminyl)asparagine residue in which the glucosamine residue may be further glycosylated, to yield a (substituted) N-acetyl-beta-D-glucosaminylamine and a peptide containing an aspartate residue.. Its function is as follows. Specifically deglycosylates the denatured form of N-linked glycoproteins in the cytoplasm and assists their proteasome-mediated degradation. Cleaves the beta-aspartyl-glucosamine (GlcNAc) of the glycan and the amide side chain of Asn, converting Asn to Asp. Prefers proteins containing high-mannose over those bearing complex type oligosaccharides. Can recognize misfolded proteins in the endoplasmic reticulum that are exported to the cytosol to be destroyed and deglycosylate them, while it has no activity toward native proteins. Deglycosylation is a prerequisite for subsequent proteasome-mediated degradation of some, but not all, misfolded glycoproteins. The protein is Peptide-N(4)-(N-acetyl-beta-glucosaminyl)asparagine amidase (PNG1) of Oryza sativa subsp. japonica (Rice).